Consider the following 687-residue polypeptide: Adhesion G-protein coupled receptor G1 (687 aa).

Positions 1-25 (MTAQSLLQMTLFLLSLLFLVQGAHG) are cleaved as a signal peptide. Heparin is bound at residue 26–33 (RGHREDFR). Residues 26 to 402 (RGHREDFRFC…VEVDAVHKHY (377 aa)) are Extracellular-facing. Intrachain disulfides connect cysteine 35/cysteine 91 and cysteine 121/cysteine 177. N-linked (GlcNAc...) asparagine glycosylation is found at asparagine 39, asparagine 148, and asparagine 171. Heparin is bound at residue 190–200 (LKHPQKASRRP). In terms of domain architecture, GAIN-B spans 224–395 (DTVSFEEDRI…AVLMVSSVEV (172 aa)). Residues asparagine 234, asparagine 303, asparagine 324, and asparagine 341 are each glycosylated (N-linked (GlcNAc...) asparagine). Intrachain disulfides connect cysteine 346/cysteine 377 and cysteine 366/cysteine 379. Positions 346–395 (CVFWVEDPTLSSPGHWSSAGCETVRRETQTSCFCNHLTYFAVLMVSSVEV) are GPS. Residues 384–397 (YFAVLMVSSVEVDA) form a stachel region. Residues 403–423 (LSLLSYVGCVISALACVVTIA) form a helical membrane-spanning segment. Topologically, residues 424 to 442 (AYLCSRRKPRDYTIKVHMN) are cytoplasmic. The helical transmembrane segment at 443–463 (LLLAVFLLDMSFLLSEPVALT) threads the bilayer. Topologically, residues 464–470 (GSEAGCR) are extracellular. Residues 471 to 491 (AGAIFLHFSLLACLSWMGLEG) form a helical membrane-spanning segment. Topologically, residues 492–512 (YNLYRLVVEVFGTYVPGYLLK) are cytoplasmic. The helical transmembrane segment at 513–533 (LSAMGWGFPIFLVTLVALVDV) threads the bilayer. Topologically, residues 534 to 570 (DNYGPIILAVHRTPESVIYPSMCWIRDSLVSYVTNLG) are extracellular. The helical transmembrane segment at 571–591 (LFSLVFLFNMAMLGTMVVQIL) threads the bilayer. Over 592–603 (RLRPHTQKWSHV) the chain is Cytoplasmic. Residues 604–624 (LTLLGLSLVLGLPWALIFFSF) form a helical membrane-spanning segment. At 625 to 630 (ASGTFQ) the chain is on the extracellular side. A helical transmembrane segment spans residues 631–651 (LVVLYLFSIITSFQGFLIFIW). The Cytoplasmic portion of the chain corresponds to 652-687 (YWSMRLQARGGPSPLKSNSDSARLPISSGSTSSSRI). Positions 664-687 (SPLKSNSDSARLPISSGSTSSSRI) are disordered. The segment covering 678-687 (SSGSTSSSRI) has biased composition (low complexity).

Belongs to the G-protein coupled receptor 2 family. LN-TM7 subfamily. In terms of assembly, heterodimer of 2 chains generated by proteolytic processing; the large extracellular N-terminal fragment (ADGRG1 NT) and the membrane-bound C-terminal fragment (ADGRG1-CT) predominantly remain associated and non-covalently linked. ADGRG1 NT self-associates in a trans-trans manner; the homophilic interaction enhances receptor signaling. Interacts with TGM2. Interacts with heparin; leading to the reduction of ADGRG1 shedding. Interacts with COL3A1. Part of a GPCR-tetraspanin complex at least consisting of ADGRG1, CD81, eventually CD9, and GNA11 in which CD81 is enhancing the association of ADGRG1 with GNA11. In terms of processing, autoproteolytically cleaved into 2 fragments; the large extracellular N-terminal fragment (ADGRG1 NT) and the membrane-bound C-terminal fragment (ADGRG1 CT) predominantly remain associated and non-covalently linked. Shedding to yield the secreted ADGRG1 N-terminal fragment seems to involve metalloprotease(s). Post-translationally, ubiquitinated. Undergoes polyubiquitination upon activation.

It localises to the cell membrane. The protein localises to the secreted. Its subcellular location is the membrane raft. Its activity is regulated as follows. Forms a heterodimer of 2 chains generated by proteolytic processing that remain associated through non-covalent interactions mediated by the GAIN-B domain. In the inactivated receptor, the Stachel sequence (also named stalk) is embedded in the GAIN-B domain, where it adopts a beta-strand conformation. On activation, the Stachel moves into the 7 transmembrane region and adopts a twisted hook-shaped configuration that forms contacts within the receptor, leading to coupling of a G-alpha protein, which activates signaling. The cleaved GAIN-B and N-terminal domains can then dissociate from the rest of the receptor. Its function is as follows. Adhesion G-protein coupled receptor (aGPCR) for steroid hormone 17alpha-hydroxypregnenolone (17-OH), which is involved in cell adhesion and cell-cell interactions. Ligand binding causes a conformation change that triggers signaling via guanine nucleotide-binding proteins (G proteins) and modulates the activity of downstream effectors, such as RhoA pathway. ADGRG1 is coupled to G(12) and/or G(13) G proteins (GNA12 and GNA13, respectively) and mediates the activation Rho small GTPases. Acts as a potent suppressor of ferroptosis: binding to 17-OH-binding initiates signaling that down-regulates CD36 and alleviates ferroptosis-induced liver injury. Ligand-binding also induces cell adhesion activity via association with proteins such as collagen III/COL3A1 and TGM2. Mediates cell matrix adhesion in developing neurons and hematopoietic stem cells. Involved in cortical development, specifically in maintenance of the pial basement membrane integrity and in cortical lamination: association with COL3A1 in the developing brain inhibits neuronal migration via activation of the RhoA pathway. Together with TGM2, acts as a regulator of myelination and myelin repair in oligodendrocyte precursor cells. Acts as a hemostatic sensor of shear force: G protein-coupled receptor signaling is activated in response to shear force in platelets, promoting G(13) G protein signaling, and platelet shape change and aggregation in a COL3A1-dependent manner. Acts as an inhibitor of VEGFA production thereby inhibiting angiogenesis through a signaling pathway mediated by PRKCA. Plays a role in the maintenance of hematopoietic stem cells in bone marrow niche. Plays an essential role in testis development. The protein is Adhesion G-protein coupled receptor G1 (ADGRG1) of Pongo pygmaeus (Bornean orangutan).